A 156-amino-acid chain; its full sequence is Dynein 16 kDa light chain, flagellar outer arm (156 aa).

The Thioredoxin domain occupies 2 to 116; it reads AAGLPPVQYS…LNQQVLSLTP (115 aa). Cys37 and Cys40 are disulfide-bonded.

As to quaternary structure, consists of at least 3 heavy chains (alpha, beta and gamma), 2 intermediate chains and 8 light chains.

Its subcellular location is the cell projection. The protein resides in the cilium. It is found in the flagellum. It localises to the cytoplasm. The protein localises to the cytoskeleton. Its subcellular location is the flagellum axoneme. Its function is as follows. May be involved in regulating the redox state of functionally important thiol groups within dynein. This chain is Dynein 16 kDa light chain, flagellar outer arm, found in Chlamydomonas reinhardtii (Chlamydomonas smithii).